Reading from the N-terminus, the 233-residue chain is Antilisterial bacteriocin subtilosin biosynthesis protein AlbG (233 aa).

The next 5 helical transmembrane spans lie at 4 to 24 (STVFTVLLLLLGMAAYSFGWV), 46 to 66 (GLLACIAAVLMLPAFLYLHYV), 116 to 136 (TYVMAAVLCQVIIFGCMFEIV), 145 to 165 (TPPIVSTGMALLLILYLLFYM), and 192 to 212 (IGWMLSFTISELLFLIILAAI).

Its subcellular location is the cell membrane. Its function is as follows. Involved in the production of the bacteriocin subtilosin. In Bacillus subtilis, this protein is Antilisterial bacteriocin subtilosin biosynthesis protein AlbG (albG).